A 163-amino-acid chain; its full sequence is Epithelial membrane protein 3 (163 aa).

A helical membrane pass occupies residues 4-24 (LLLVVSALHILILILLFVATL). 2 N-linked (GlcNAc...) asparagine glycosylation sites follow: asparagine 47 and asparagine 56. Helical transmembrane passes span 66-86 (VQVLMVLSLILCCLSFILFMF), 100-120 (TGLCQLCTSVAVFTGALIYAI), and 139-159 (FALAWVAFPLALVSGIIYIHL).

It belongs to the PMP-22/EMP/MP20 family.

It localises to the membrane. Its function is as follows. Probably involved in cell proliferation and cell-cell interactions. In Homo sapiens (Human), this protein is Epithelial membrane protein 3 (EMP3).